Reading from the N-terminus, the 174-residue chain is Large ribosomal subunit protein uL10 (174 aa).

It belongs to the universal ribosomal protein uL10 family. In terms of assembly, part of the ribosomal stalk of the 50S ribosomal subunit. The N-terminus interacts with L11 and the large rRNA to form the base of the stalk. The C-terminus forms an elongated spine to which L12 dimers bind in a sequential fashion forming a multimeric L10(L12)X complex.

Forms part of the ribosomal stalk, playing a central role in the interaction of the ribosome with GTP-bound translation factors. This Synechococcus sp. (strain RCC307) protein is Large ribosomal subunit protein uL10.